The following is a 497-amino-acid chain: Aspartyl/glutamyl-tRNA(Asn/Gln) amidotransferase subunit B (497 aa).

It belongs to the GatB/GatE family. GatB subfamily. Heterotrimer of A, B and C subunits.

It catalyses the reaction L-glutamyl-tRNA(Gln) + L-glutamine + ATP + H2O = L-glutaminyl-tRNA(Gln) + L-glutamate + ADP + phosphate + H(+). The enzyme catalyses L-aspartyl-tRNA(Asn) + L-glutamine + ATP + H2O = L-asparaginyl-tRNA(Asn) + L-glutamate + ADP + phosphate + 2 H(+). In terms of biological role, allows the formation of correctly charged Asn-tRNA(Asn) or Gln-tRNA(Gln) through the transamidation of misacylated Asp-tRNA(Asn) or Glu-tRNA(Gln) in organisms which lack either or both of asparaginyl-tRNA or glutaminyl-tRNA synthetases. The reaction takes place in the presence of glutamine and ATP through an activated phospho-Asp-tRNA(Asn) or phospho-Glu-tRNA(Gln). The chain is Aspartyl/glutamyl-tRNA(Asn/Gln) amidotransferase subunit B from Novosphingobium aromaticivorans (strain ATCC 700278 / DSM 12444 / CCUG 56034 / CIP 105152 / NBRC 16084 / F199).